The sequence spans 159 residues: ATP synthase subunit b 2 (159 aa).

The helical transmembrane segment at 1–21 (MDATFWALVALIIFVGILLYM) threads the bilayer.

Belongs to the ATPase B chain family. In terms of assembly, F-type ATPases have 2 components, F(1) - the catalytic core - and F(0) - the membrane proton channel. F(1) has five subunits: alpha(3), beta(3), gamma(1), delta(1), epsilon(1). F(0) has three main subunits: a(1), b(2) and c(10-14). The alpha and beta chains form an alternating ring which encloses part of the gamma chain. F(1) is attached to F(0) by a central stalk formed by the gamma and epsilon chains, while a peripheral stalk is formed by the delta and b chains.

It is found in the cell inner membrane. F(1)F(0) ATP synthase produces ATP from ADP in the presence of a proton or sodium gradient. F-type ATPases consist of two structural domains, F(1) containing the extramembraneous catalytic core and F(0) containing the membrane proton channel, linked together by a central stalk and a peripheral stalk. During catalysis, ATP synthesis in the catalytic domain of F(1) is coupled via a rotary mechanism of the central stalk subunits to proton translocation. In terms of biological role, component of the F(0) channel, it forms part of the peripheral stalk, linking F(1) to F(0). This Chelativorans sp. (strain BNC1) protein is ATP synthase subunit b 2.